The chain runs to 325 residues: Glucosyl-3-phosphoglycerate synthase (325 aa).

Residues 37–41 (PSLNE), S71, K104, and 124–125 (DS) contribute to the UDP-alpha-D-glucose site. D126 is a binding site for Mn(2+). 171 to 174 (GRVT) provides a ligand contact to (2R)-3-phosphoglycerate. Residues 216–219 (YGVE) and 243–248 (RIHDNQ) contribute to the UDP-alpha-D-glucose site. A Mn(2+)-binding site is contributed by H245. A (2R)-3-phosphoglycerate-binding site is contributed by N247.

This sequence belongs to the glycosyltransferase 2 family. In terms of assembly, homodimer in solution. Co(2+) serves as cofactor. It depends on Mg(2+) as a cofactor. Mn(2+) is required as a cofactor. Requires Ni(2+) as cofactor. The cofactor is Zn(2+).

It catalyses the reaction an NDP-alpha-D-glucose + (2R)-3-phosphoglycerate = (2R)-2-O-(alpha-D-glucopyranosyl)-3-phospho-glycerate + a ribonucleoside 5'-diphosphate + H(+). It carries out the reaction (2R)-3-phosphoglycerate + UDP-alpha-D-glucose = (2R)-2-O-(alpha-D-glucopyranosyl)-3-phospho-glycerate + UDP + H(+). The catalysed reaction is ADP-alpha-D-glucose + (2R)-3-phosphoglycerate = (2R)-2-O-(alpha-D-glucopyranosyl)-3-phospho-glycerate + ADP + H(+). With respect to regulation, inhibited by ADP and EDTA. Functionally, involved in the biosynthesis of the compatible solute mannosylglucosylglycerate through a phosphorylating pathway. Catalyzes the transfer of the glucose moiety from a nuleotide sugar such as UDP-alpha-D-glucose to the position 2 of 3-phospho-D-glycerate (3-PGA) to form glucosyl-3-phosphoglycerate (GPG). UDP-glucose is the preferred substrate, but it can be partially replaced by ADP-glucose. This Petrotoga mobilis (strain DSM 10674 / SJ95) protein is Glucosyl-3-phosphoglycerate synthase.